A 140-amino-acid polypeptide reads, in one-letter code: FAD synthase (140 aa).

ATP-binding positions include Thr9–Phe10, His14–His17, and Asp92.

It belongs to the archaeal FAD synthase family. Homodimer. The cofactor is a divalent metal cation.

It catalyses the reaction FMN + ATP + H(+) = FAD + diphosphate. Its pathway is cofactor biosynthesis; FAD biosynthesis; FAD from FMN: step 1/1. Functionally, catalyzes the transfer of the AMP portion of ATP to flavin mononucleotide (FMN) to produce flavin adenine dinucleotide (FAD) coenzyme. This is FAD synthase from Natronomonas pharaonis (strain ATCC 35678 / DSM 2160 / CIP 103997 / JCM 8858 / NBRC 14720 / NCIMB 2260 / Gabara) (Halobacterium pharaonis).